A 131-amino-acid polypeptide reads, in one-letter code: DNA-directed RNA polymerase subunit omega (131 aa).

The tract at residues 78–131 (DEPEAEAVPALSSAPDAAQSDAMGDVQFDRMTEEDLLRGLEGLVPPAATDDDGE) is disordered. A compositionally biased stretch (basic and acidic residues) spans 104 to 115 (QFDRMTEEDLLR).

It belongs to the RNA polymerase subunit omega family. The RNAP catalytic core consists of 2 alpha, 1 beta, 1 beta' and 1 omega subunit. When a sigma factor is associated with the core the holoenzyme is formed, which can initiate transcription.

The catalysed reaction is RNA(n) + a ribonucleoside 5'-triphosphate = RNA(n+1) + diphosphate. Promotes RNA polymerase assembly. Latches the N- and C-terminal regions of the beta' subunit thereby facilitating its interaction with the beta and alpha subunits. This chain is DNA-directed RNA polymerase subunit omega, found in Beijerinckia indica subsp. indica (strain ATCC 9039 / DSM 1715 / NCIMB 8712).